A 234-amino-acid chain; its full sequence is Uridylate kinase (234 aa).

Residue 9–12 coordinates ATP; it reads KLSG. G51 provides a ligand contact to UMP. ATP is bound by residues G52 and R56. UMP contacts are provided by residues D71 and 132–139; that span reads CGNPFFTT. Residues T159, Y165, and D168 each coordinate ATP.

Belongs to the UMP kinase family. As to quaternary structure, homohexamer.

Its subcellular location is the cytoplasm. It carries out the reaction UMP + ATP = UDP + ADP. The protein operates within pyrimidine metabolism; CTP biosynthesis via de novo pathway; UDP from UMP (UMPK route): step 1/1. With respect to regulation, inhibited by UTP. Its function is as follows. Catalyzes the reversible phosphorylation of UMP to UDP. This is Uridylate kinase from Prochlorococcus marinus subsp. pastoris (strain CCMP1986 / NIES-2087 / MED4).